A 249-amino-acid polypeptide reads, in one-letter code: 2,3-bisphosphoglycerate-dependent phosphoglycerate mutase (249 aa).

Residues R9–N16, T22–G23, R61, E88–Y91, K99, R115–R116, and G184–N185 each bind substrate. The Tele-phosphohistidine intermediate role is filled by H10. Residue E88 is the Proton donor/acceptor of the active site.

This sequence belongs to the phosphoglycerate mutase family. BPG-dependent PGAM subfamily. As to quaternary structure, homodimer.

It carries out the reaction (2R)-2-phosphoglycerate = (2R)-3-phosphoglycerate. It participates in carbohydrate degradation; glycolysis; pyruvate from D-glyceraldehyde 3-phosphate: step 3/5. Functionally, catalyzes the interconversion of 2-phosphoglycerate and 3-phosphoglycerate. This is 2,3-bisphosphoglycerate-dependent phosphoglycerate mutase from Xanthomonas axonopodis pv. citri (strain 306).